The following is a 472-amino-acid chain: Uronate isomerase (472 aa).

The protein belongs to the metallo-dependent hydrolases superfamily. Uronate isomerase family.

It carries out the reaction D-glucuronate = D-fructuronate. It catalyses the reaction aldehydo-D-galacturonate = keto-D-tagaturonate. It participates in carbohydrate metabolism; pentose and glucuronate interconversion. The chain is Uronate isomerase from Xanthomonas oryzae pv. oryzae (strain MAFF 311018).